Reading from the N-terminus, the 342-residue chain is GTPase Obg (342 aa).

In terms of domain architecture, Obg spans 1 to 159; it reads MQFIDQAQIE…KLLRLELKLL (159 aa). One can recognise an OBG-type G domain in the interval 160 to 330; it reads AEVGIIGLPN…MLQEVWGILD (171 aa). Residues 166-173, 191-195, 213-216, 280-283, and 311-313 each bind GTP; these read GLPNAGKS, FTTLI, DIPG, NKID, and SAV. Residues Ser173 and Thr193 each coordinate Mg(2+).

This sequence belongs to the TRAFAC class OBG-HflX-like GTPase superfamily. OBG GTPase family. Monomer. Requires Mg(2+) as cofactor.

It is found in the cytoplasm. Its function is as follows. An essential GTPase which binds GTP, GDP and possibly (p)ppGpp with moderate affinity, with high nucleotide exchange rates and a fairly low GTP hydrolysis rate. Plays a role in control of the cell cycle, stress response, ribosome biogenesis and in those bacteria that undergo differentiation, in morphogenesis control. The protein is GTPase Obg of Trichormus variabilis (strain ATCC 29413 / PCC 7937) (Anabaena variabilis).